The chain runs to 1550 residues: Protein TIME FOR COFFEE (1550 aa).

10 disordered regions span residues 1-191 (MDRN…PVSP), 207-304 (VPRK…PVAV), 325-505 (TSKQ…SERG), 708-736 (QGSVLGRSSNPVQDKNSQSTSKSSETAQR), 779-805 (RPPNSGITSSGPTATSTSMNGSASATP), 859-1023 (FNGS…KAGV), 1086-1130 (ASLE…QSIA), 1163-1196 (ALPQSSGSLPTSHHQQLLQQQQQQHMQRSQSQQP), 1213-1296 (AASA…SVAA), and 1321-1435 (NSKP…PKHG). The span at 43–80 (EAARLRDRGGSNKKDRDRERDRDRERERERDRERDRLN) shows a compositional bias: basic and acidic residues. Positions 100 to 118 (DGGDDSSEESVNDDEEYDD) are enriched in acidic residues. Residues 134-151 (SNNISAASFSSSLSNHHN) are compositionally biased toward low complexity. The segment covering 157–171 (LHHHHHSHNNNHQRK) has biased composition (basic residues). The segment covering 241-250 (RQISSTSPAN) has biased composition (polar residues). Residues 292–301 (KSSSSKLSSP) are compositionally biased toward low complexity. Residues 348-366 (RVSSPISNPQTLPQSSITL) show a composition bias toward polar residues. Residues 367 to 379 (AANSSSSNVSAIA) show a composition bias toward low complexity. Residues 409–432 (SKSQVPFSNQLKSSGSGEGNSSVL) are compositionally biased toward polar residues. Composition is skewed to basic and acidic residues over residues 447–461 (DSEKKENNLSKDETI) and 473–490 (SDGEGAKSSSPEKEKFEI). Composition is skewed to polar residues over residues 713-736 (GRSSNPVQDKNSQSTSKSSETAQR), 783-803 (SGITSSGPTATSTSMNGSASA), and 884-992 (LTGQ…NLGL). A compositionally biased stretch (gly residues) spans 1112-1126 (SGGGAIGKTSGGNGG). Positions 1164 to 1173 (LPQSSGSLPT) are enriched in polar residues. Over residues 1174–1195 (SHHQQLLQQQQQQHMQRSQSQQ) the composition is skewed to low complexity. Residues 1234–1253 (NMTTSPAGTTKFANANSGFP) show a composition bias toward polar residues. A compositionally biased stretch (low complexity) spans 1254-1273 (QNLVQSSSNQVQSQQWKNNS). Composition is skewed to polar residues over residues 1274–1296 (PRTTNTTQAQSPSMLSPSTSVAA), 1321–1342 (NSKPMTSGSPMQQVQGGTNHQA), and 1351–1360 (SPSTSSVSKN). The segment covering 1361-1382 (ASGSPRTTASASSAANKGGQAS) has biased composition (low complexity). Composition is skewed to polar residues over residues 1383–1397 (TTTHSASQPSKNLQP) and 1405–1419 (GGRNNGPSVLGNPTT). Residues 1420–1435 (SSGSKSQQQQQLPKHG) show a composition bias toward low complexity.

Interacts with MYC2.

Its subcellular location is the nucleus. Functionally, regulator of normal clock function. Acts in the mid to late night. Contributes to the amplitude of circadian clocks. May act on the transcriptional induction of LATE ELONGATED HYPOCOTYL (LHY). Inhibits MYC2 protein accumulation, acting as a negative factor in the JA-signaling pathway. This chain is Protein TIME FOR COFFEE (TIC), found in Arabidopsis thaliana (Mouse-ear cress).